The chain runs to 115 residues: Putative TGFB1-induced anti-apoptotic factor 1 (115 aa).

In terms of tissue distribution, not detectable in normal kidney and liver. Up-regulated in chronic and acute allograft rejection: expressed in the inflammatory infiltrate and in tubular epithelial cells.

The protein resides in the nucleus. Functionally, inhibits the cytotoxic effects of TNF-alpha and overexpressed TNF receptor adapters TRADD, FADD, and RIPK1. Involved in TGF-beta1 inhibition of IkappaB-alpha expression and suppression of TNF-mediated IkappaB-alpha degradation. The sequence is that of Putative TGFB1-induced anti-apoptotic factor 1 (MYO18A) from Homo sapiens (Human).